Consider the following 369-residue polypeptide: 4-hydroxy-3-methylbut-2-en-1-yl diphosphate synthase (flavodoxin) (369 aa).

[4Fe-4S] cluster contacts are provided by Cys270, Cys273, Cys305, and Glu312.

It belongs to the IspG family. [4Fe-4S] cluster serves as cofactor.

The catalysed reaction is (2E)-4-hydroxy-3-methylbut-2-enyl diphosphate + oxidized [flavodoxin] + H2O + 2 H(+) = 2-C-methyl-D-erythritol 2,4-cyclic diphosphate + reduced [flavodoxin]. It functions in the pathway isoprenoid biosynthesis; isopentenyl diphosphate biosynthesis via DXP pathway; isopentenyl diphosphate from 1-deoxy-D-xylulose 5-phosphate: step 5/6. Its function is as follows. Converts 2C-methyl-D-erythritol 2,4-cyclodiphosphate (ME-2,4cPP) into 1-hydroxy-2-methyl-2-(E)-butenyl 4-diphosphate. The sequence is that of 4-hydroxy-3-methylbut-2-en-1-yl diphosphate synthase (flavodoxin) from Pseudomonas fluorescens (strain Pf0-1).